The chain runs to 297 residues: 33 kDa chaperonin (297 aa).

Disulfide bonds link Cys-239-Cys-241 and Cys-272-Cys-275.

The protein belongs to the HSP33 family. In terms of processing, under oxidizing conditions two disulfide bonds are formed involving the reactive cysteines. Under reducing conditions zinc is bound to the reactive cysteines and the protein is inactive.

The protein localises to the cytoplasm. In terms of biological role, redox regulated molecular chaperone. Protects both thermally unfolding and oxidatively damaged proteins from irreversible aggregation. Plays an important role in the bacterial defense system toward oxidative stress. The sequence is that of 33 kDa chaperonin from Synechococcus elongatus (strain ATCC 33912 / PCC 7942 / FACHB-805) (Anacystis nidulans R2).